The primary structure comprises 310 residues: Vomeronasal type-1 receptor 101 (310 aa).

Residues 1 to 19 (MNKVNILPSDTNMKITLFS) lie on the Extracellular side of the membrane. Residues 20 to 40 (ELSVGISANSILFFAHLCMFF) form a helical membrane-spanning segment. The Cytoplasmic segment spans residues 41-49 (EENRSKPID). Residues 50–70 (LCIAFLSLTQLMLLVTMGLIA) traverse the membrane as a helical segment. Over 71 to 93 (ADMFMAQGIWDITTCRSLIYFHR) the chain is Extracellular. Cysteine 85 and cysteine 172 are oxidised to a cystine. A helical transmembrane segment spans residues 94–114 (LLRGFNLCAACLLHILWTFTL). Over 115-134 (SPRSSCLTKFKHKSPHHISG) the chain is Cytoplasmic. A helical membrane pass occupies residues 135–155 (AYLFFCVLYMSFSSHLFVLVI). The Extracellular segment spans residues 156–193 (ATSNLTSDHFMYVTQSCSLLPMSYSRTSTFSLLMVTRE). Asparagine 159 carries N-linked (GlcNAc...) asparagine glycosylation. Residues 194–214 (VFLISLMALSSGYMVTLLWRH) traverse the membrane as a helical segment. At 215-238 (KKQAQHLHSTRLSSKASPQQRATR) the chain is on the cytoplasmic side. A helical transmembrane segment spans residues 239-259 (TILLLMTFFVVFYILGTVIFH). The Extracellular portion of the chain corresponds to 260–268 (SRTKFKDGS). The chain crosses the membrane as a helical span at residues 269 to 289 (IFYCVQIIVSHSYATISPFVF). The Cytoplasmic portion of the chain corresponds to 290-310 (VFSEKRIIKFFRSMCGRIVNT).

This sequence belongs to the G-protein coupled receptor 1 family. As to expression, expressed in 1-4% of neurons of the vomeronasal organ. Only one pheromone receptor gene may be expressed in a particular neuron. Not expressed in the main olfactory epithelium.

It is found in the cell membrane. Its function is as follows. Putative pheromone receptor implicated in the regulation of social as well as reproductive behavior. The protein is Vomeronasal type-1 receptor 101 (Vom1r101) of Rattus norvegicus (Rat).